Reading from the N-terminus, the 788-residue chain is Cadherin-10 (788 aa).

Residues 1–22 (MTIHQFLLLFLFWVCLPHFCSP) form the signal peptide. The propeptide occupies 23–54 (EIMFRRTPVPQQRILSSRVPRSDGKILHRQKR). Cadherin domains lie at 55-160 (GWMW…EPTF), 161-269 (PEEI…PPRF), 270-384 (PQNT…PPVF), 385-487 (SRSS…DNAP), and 488-606 (QFAV…LLLP). Residues 55-613 (GWMWNQFFLL…LLPAGLSTGA (559 aa)) lie on the Extracellular side of the membrane. A glycan (N-linked (GlcNAc...) asparagine) is linked at N256. 3 N-linked (GlcNAc...) asparagine glycosylation sites follow: N438, N456, and N534. The helical transmembrane segment at 614 to 634 (LIAILLCIIILLVIVVLFAAL) threads the bilayer. Topologically, residues 635-788 (KRQRKKEPLI…YGGGESDKDS (154 aa)) are cytoplasmic. S784 and S788 each carry phosphoserine.

Predominantly expressed in brain. Also found in adult and fetal kidney. Very low levels detected in prostate and fetal lung.

Its subcellular location is the cell membrane. Cadherins are calcium-dependent cell adhesion proteins. They preferentially interact with themselves in a homophilic manner in connecting cells; cadherins may thus contribute to the sorting of heterogeneous cell types. This chain is Cadherin-10 (CDH10), found in Homo sapiens (Human).